The primary structure comprises 178 residues: Nicotinamide-nucleotide adenylyltransferase (178 aa).

It belongs to the archaeal NMN adenylyltransferase family.

It is found in the cytoplasm. It catalyses the reaction beta-nicotinamide D-ribonucleotide + ATP + H(+) = diphosphate + NAD(+). It participates in cofactor biosynthesis; NAD(+) biosynthesis; NAD(+) from nicotinamide D-ribonucleotide: step 1/1. The polypeptide is Nicotinamide-nucleotide adenylyltransferase (Pyrobaculum arsenaticum (strain DSM 13514 / JCM 11321 / PZ6)).